Reading from the N-terminus, the 247-residue chain is 2,3-bisphosphoglycerate-dependent phosphoglycerate mutase (247 aa).

Substrate-binding positions include 8–15 (RHGESQWN), 21–22 (TG), arginine 60, 87–90 (ERHY), lysine 98, 114–115 (RR), and 183–184 (GN). Catalysis depends on histidine 9, which acts as the Tele-phosphohistidine intermediate. Glutamate 87 (proton donor/acceptor) is an active-site residue.

It belongs to the phosphoglycerate mutase family. BPG-dependent PGAM subfamily.

It catalyses the reaction (2R)-2-phosphoglycerate = (2R)-3-phosphoglycerate. It functions in the pathway carbohydrate degradation; glycolysis; pyruvate from D-glyceraldehyde 3-phosphate: step 3/5. In terms of biological role, catalyzes the interconversion of 2-phosphoglycerate and 3-phosphoglycerate. The chain is 2,3-bisphosphoglycerate-dependent phosphoglycerate mutase from Chlorobaculum parvum (strain DSM 263 / NCIMB 8327) (Chlorobium vibrioforme subsp. thiosulfatophilum).